Reading from the N-terminus, the 200-residue chain is Recombination protein RecR (200 aa).

The segment at 57–72 (CRQCRTLTEQELCPQC) adopts a C4-type zinc-finger fold. One can recognise a Toprim domain in the interval 80–175 (TQLCVVEGPT…VASRIAHGVP (96 aa)).

This sequence belongs to the RecR family.

In terms of biological role, may play a role in DNA repair. It seems to be involved in an RecBC-independent recombinational process of DNA repair. It may act with RecF and RecO. This is Recombination protein RecR from Pseudomonas putida (strain ATCC 700007 / DSM 6899 / JCM 31910 / BCRC 17059 / LMG 24140 / F1).